We begin with the raw amino-acid sequence, 313 residues long: Probable cell division protein WhiA (313 aa).

A DNA-binding region (H-T-H motif) is located at residues 276-309 (SLKELGEMLHPKLGKSGVNHRLRKLDEIAERIRK).

Belongs to the WhiA family.

Its function is as follows. Involved in cell division and chromosome segregation. The chain is Probable cell division protein WhiA from Ruminiclostridium cellulolyticum (strain ATCC 35319 / DSM 5812 / JCM 6584 / H10) (Clostridium cellulolyticum).